Consider the following 285-residue polypeptide: Aldo-keto reductase (285 aa).

165-175 lines the NADP(+) pocket; sequence APLAGGILTGK.

The protein belongs to the aldo/keto reductase family. Aldo/keto reductase 2 subfamily.

In Babesia bovis, this protein is Aldo-keto reductase.